The primary structure comprises 686 residues: MSPTAMSLTTTTSRLPICRAQGGGVAKEKRTTPPPAKITPPSSSSSEAAGLSRRRLLQSAGLGLGLGLTAARPARAEATAPEEVTSNRMSYSRFLEYLDAGAVKKVDFFENGTVAVAEVDDAAALSRVHRVKVQLPGLPAELVRKLRDKGVDFAAHPVEPSAGVMLLDLLVNFGFPLLFVASLLWRSPTMNNPGGGPSLPFGLGKSKAKFQMEPKTGVTFDDVAGVDEAKQDFQEIVQFLKFPEKFTAVGARTPKGVLLVGPPGTGKTLLAKAIAGEAGVPFFSLSGSEFIEMFVGVGASRVRDLFDRAKASAPCLVFIDEIDAVGRQRGAGIGGGNDEREQTLNQLLTEMDGFGGGDGGVVVIAATNRPEILDAALLRPGRFDRRVSVGLPDVRGREEILLVHGANKRLDPGVSLAVVAMRTPGFSGADLANLMNEAAILAGRRGKDRITVSEIDDSIDRIVAGLEGTSMTDGKSKMLVAYHEIGHAVCATLTAGHDEVQKVTLIPRGQARGLTWFLPGEEDPALVSRQQIFAGIVGGLGGRAAEEVVFGEPEVTTGAAGDLQQVTRVARRMVTAFGMSEIGPWALAEPAAQGGDVVLRMLARSSMSERLAADIDAAVRTIVDEAYEVAKAHVRRNRAAIDQLVDVLMEKETLGGDEFRAILSEHVDIGKERRETAARTQQLATA.

Residues 1–14 (MSPTAMSLTTTTSR) show a composition bias toward polar residues. Residues 1-52 (MSPTAMSLTTTTSRLPICRAQGGGVAKEKRTTPPPAKITPPSSSSSEAAGLS) form a disordered region. Residues 1-75 (MSPTAMSLTT…LGLTAARPAR (75 aa)) constitute a chloroplast transit peptide. Residues 39–52 (TPPSSSSSEAAGLS) are compositionally biased toward low complexity. A helical membrane pass occupies residues 164–184 (VMLLDLLVNFGFPLLFVASLL). 261 to 268 (GPPGTGKT) is a binding site for ATP. Zn(2+) is bound at residue histidine 483. Residue glutamate 484 is part of the active site. Residues histidine 487 and aspartate 562 each coordinate Zn(2+).

This sequence in the N-terminal section; belongs to the AAA ATPase family. The protein in the C-terminal section; belongs to the peptidase M41 family. Requires Zn(2+) as cofactor.

The protein localises to the plastid. Its subcellular location is the chloroplast thylakoid membrane. Its function is as follows. Probable ATP-dependent zinc metallopeptidase. The chain is ATP-dependent zinc metalloprotease FTSH 6, chloroplastic (FTSH6) from Oryza sativa subsp. japonica (Rice).